Here is a 495-residue protein sequence, read N- to C-terminus: Serine/threonine-protein kinase STN8, chloroplastic (495 aa).

The transit peptide at 1 to 49 (MASLLSPATPTATSAAFHSCSTAGFSTPTHISSQNSSLSLLSRRGCMMR) directs the protein to the chloroplast. Positions 133-477 (FLVTEKLGEG…AAAALRHPYF (345 aa)) constitute a Protein kinase domain. Residues 139 to 147 (LGEGSFGVV) and Lys-186 each bind ATP. Asp-308 (proton acceptor) is an active-site residue.

Belongs to the protein kinase superfamily. Ser/Thr protein kinase family.

The protein resides in the plastid. The protein localises to the chloroplast thylakoid. It catalyses the reaction L-seryl-[protein] + ATP = O-phospho-L-seryl-[protein] + ADP + H(+). The catalysed reaction is L-threonyl-[protein] + ATP = O-phospho-L-threonyl-[protein] + ADP + H(+). Light-dependent serine/threonine protein kinase that specifically phosphorylates N-terminal threonine residues in psbA/D1, psbD/D2, psbC/CP43 and psbH, which are components of the core antenna complex of photosystem II. Phosphorylation of PSII core components facilitates the exchange of chlorophyll proteins between the grana and the stroma lamellae. Also involved in the phosphorylation of the calcium-sensing receptor (CaS). This is Serine/threonine-protein kinase STN8, chloroplastic (STN8) from Arabidopsis thaliana (Mouse-ear cress).